We begin with the raw amino-acid sequence, 323 residues long: Elongation factor P--(R)-beta-lysine ligase (323 aa).

Substrate is bound at residue 76–78; sequence SPE. Residues 100–102 and asparagine 109 each bind ATP; that span reads RNE. Tyrosine 118 is a substrate binding site. 242–243 lines the ATP pocket; that stretch reads EL. Glutamate 249 contributes to the substrate binding site. Residue glycine 298 coordinates ATP.

This sequence belongs to the class-II aminoacyl-tRNA synthetase family. EpmA subfamily. Homodimer.

The enzyme catalyses D-beta-lysine + L-lysyl-[protein] + ATP = N(6)-((3R)-3,6-diaminohexanoyl)-L-lysyl-[protein] + AMP + diphosphate + H(+). In terms of biological role, with EpmB is involved in the beta-lysylation step of the post-translational modification of translation elongation factor P (EF-P). Catalyzes the ATP-dependent activation of (R)-beta-lysine produced by EpmB, forming a lysyl-adenylate, from which the beta-lysyl moiety is then transferred to the epsilon-amino group of a conserved specific lysine residue in EF-P. This chain is Elongation factor P--(R)-beta-lysine ligase, found in Haemophilus influenzae (strain PittGG).